A 126-amino-acid chain; its full sequence is Actin-depolymerizing factor (126 aa).

The ADF-H domain maps to 1 to 126 (EDNCKLKFLE…SFDIIKSRAL (126 aa)).

It belongs to the actin-binding proteins ADF family. In terms of tissue distribution, preferentially in mature anther.

Its function is as follows. Actin-depolymerizing protein. Severs actin filaments (F-actin) and binds to actin monomers. The sequence is that of Actin-depolymerizing factor from Brassica napus (Rape).